The sequence spans 313 residues: MSWLSLTFRIGSDYVDLVGDRLLERGALSVDVHDAGEGTSQEQPLFGEPGAPLDQFWQQAEVTVLLEENANIDEIIQGVAEVIGLPALPEYQLAQVMEQDWVRLTQAQFEPIRISSRLWVVPSWHEPPDPAAISLRLDPGLAFGTGSHPTTRLCLTWLDQFLQPGDSVLDYGCGSGILAIAALKFGADRVTGMDIDPNAITASLDNARNNFCDPDRLLFTTVLPPLVEDDRASAEWAPVTIVVANILANPLIMLAPVLMKALQPGGRIVLSGILETQADEVLQVYSEWFDMHIAAKEQGWVLLAGQKSGGGFA.

4 residues coordinate S-adenosyl-L-methionine: threonine 151, glycine 172, aspartate 194, and asparagine 245.

The protein belongs to the methyltransferase superfamily. PrmA family.

The protein resides in the cytoplasm. It carries out the reaction L-lysyl-[protein] + 3 S-adenosyl-L-methionine = N(6),N(6),N(6)-trimethyl-L-lysyl-[protein] + 3 S-adenosyl-L-homocysteine + 3 H(+). Functionally, methylates ribosomal protein L11. This is Ribosomal protein L11 methyltransferase from Nitrosomonas europaea (strain ATCC 19718 / CIP 103999 / KCTC 2705 / NBRC 14298).